Consider the following 262-residue polypeptide: Polyamine aminopropyltransferase (262 aa).

The PABS domain maps to 1–249 (MWITQEITPY…DIHRAAFALP (249 aa)). Asn-29 contacts S-methyl-5'-thioadenosine. Residue Asp-83 participates in spermidine binding. The active-site Proton acceptor is the Asp-155.

The protein belongs to the spermidine/spermine synthase family. As to quaternary structure, homodimer or homotetramer.

It is found in the cytoplasm. The enzyme catalyses S-adenosyl 3-(methylsulfanyl)propylamine + putrescine = S-methyl-5'-thioadenosine + spermidine + H(+). It functions in the pathway amine and polyamine biosynthesis; spermidine biosynthesis; spermidine from putrescine: step 1/1. Catalyzes the irreversible transfer of a propylamine group from the amino donor S-adenosylmethioninamine (decarboxy-AdoMet) to putrescine (1,4-diaminobutane) to yield spermidine. The sequence is that of Polyamine aminopropyltransferase from Helicobacter pylori (strain P12).